The following is a 65-amino-acid chain: Sperm protamine P1 (65 aa).

The disordered stretch occupies residues 1 to 65; sequence MARYRHSRSR…RYSRRRRRRY (65 aa).

It belongs to the protamine P1 family. As to expression, testis.

It is found in the nucleus. It localises to the chromosome. Protamines substitute for histones in the chromatin of sperm during the haploid phase of spermatogenesis. They compact sperm DNA into a highly condensed, stable and inactive complex. The polypeptide is Sperm protamine P1 (PRM1) (Lagorchestes hirsutus (Rufous hare-wallaby)).